A 239-amino-acid chain; its full sequence is MNKNIIIKSIAALTILTSITGVGTTVVDGIQQTAKAENSVKLITNTNVAPYSGVTWMGAGTGFVVGNQTIITNKHVTYHMKVGDEIKAHPNGFYNNGGGLYKVTKIVDYPGKEDIAVVQVEEKSTQPKGRKFKDFTSKFNIASEAKENEPISVIGYPNPNGNKLQMYESTGKVLSVNGNIVTSDAVVQPGSSGSPILNSKREAIGVMYASDKPTGESTRSFAVYFSPEIKKFIADNLDK.

The N-terminal stretch at 1–36 (MNKNIIIKSIAALTILTSITGVGTTVVDGIQQTAKA) is a signal peptide. Residues His75, Asp114, and Ser192 each act as charge relay system in the active site.

It belongs to the peptidase S1B family.

It is found in the secreted. The polypeptide is Serine protease SplD (splD) (Staphylococcus aureus (strain COL)).